The following is a 403-amino-acid chain: ESX-5 secretion system protein EccE5 (403 aa).

Transmembrane regions (helical) follow at residues L9–V29 and I43–Y63.

The protein belongs to the EccE family. Part of the ESX-5 / type VII secretion system (T7SS), which is composed of cytosolic and membrane components. The ESX-5 membrane complex is composed of EccB5, EccC5, EccD5 and EccE5.

Its subcellular location is the cell inner membrane. Functionally, part of the ESX-5 specialized secretion system, which is responsible for the secretion of EsxN and a number of PE_PGRS and PPE proteins. The protein is ESX-5 secretion system protein EccE5 of Mycobacterium marinum (strain ATCC BAA-535 / M).